A 427-amino-acid chain; its full sequence is Glutamate-1-semialdehyde 2,1-aminomutase (427 aa).

An N6-(pyridoxal phosphate)lysine modification is found at lysine 267.

The protein belongs to the class-III pyridoxal-phosphate-dependent aminotransferase family. HemL subfamily. As to quaternary structure, homodimer. The cofactor is pyridoxal 5'-phosphate.

The protein localises to the cytoplasm. The enzyme catalyses (S)-4-amino-5-oxopentanoate = 5-aminolevulinate. It participates in porphyrin-containing compound metabolism; protoporphyrin-IX biosynthesis; 5-aminolevulinate from L-glutamyl-tRNA(Glu): step 2/2. This chain is Glutamate-1-semialdehyde 2,1-aminomutase, found in Desulfosudis oleivorans (strain DSM 6200 / JCM 39069 / Hxd3) (Desulfococcus oleovorans).